The primary structure comprises 359 residues: Nicotinate-nucleotide--dimethylbenzimidazole phosphoribosyltransferase (359 aa).

Glu318 functions as the Proton acceptor in the catalytic mechanism.

The protein belongs to the CobT family. In terms of assembly, homodimer.

It carries out the reaction 5,6-dimethylbenzimidazole + nicotinate beta-D-ribonucleotide = alpha-ribazole 5'-phosphate + nicotinate + H(+). It functions in the pathway nucleoside biosynthesis; alpha-ribazole biosynthesis; alpha-ribazole from 5,6-dimethylbenzimidazole: step 1/2. Functionally, catalyzes the synthesis of alpha-ribazole-5'-phosphate from nicotinate mononucleotide (NAMN) and 5,6-dimethylbenzimidazole (DMB). The chain is Nicotinate-nucleotide--dimethylbenzimidazole phosphoribosyltransferase from Escherichia coli O8 (strain IAI1).